The sequence spans 483 residues: MQWDIVIGLEIHVQLATQTKIFSGSSTAYGAEPNTQANAVDLAMPGTLPVPNEQAFRYAVMFGLATNAEIGRRSVFERKNYFYPDLPKGYQTTQLAQPIVGPGYVDIDLADGSTKRVRIHHAHLEEDAGKSLHEDYHGMTGIDLNRAGTPLIEVVTEPDMTSAEEAVAFAKKLHSIVTSLGICDGDMSQGSMRFDVNISLKPKGSDTLGTRTETKNLNSFRFMEQAIAHEVERQMDILEDGGVIVQETRLYNGDRDESRSMRTKEEANDYRYFPCPDLLPVEIDDAFIEDARSRLPELPDARRARFKEQYGLNDYDAGILSADAKLAAFFEETVEHGKDAKLAANWIQGEFSARLNAEEKSVAEAPITGAQLGAMVTRIADNTLSSAGAKKVFEALWTGENNDVDAIIEAKGLKQVSDTGALESMVDEVLAGMPDQVAQYQNEEDPKKRKKMLGGFMGPLMKASKGQGNPKLFNEILVRKLGG.

The protein belongs to the GatB/GatE family. GatB subfamily. In terms of assembly, heterotrimer of A, B and C subunits.

It catalyses the reaction L-glutamyl-tRNA(Gln) + L-glutamine + ATP + H2O = L-glutaminyl-tRNA(Gln) + L-glutamate + ADP + phosphate + H(+). It carries out the reaction L-aspartyl-tRNA(Asn) + L-glutamine + ATP + H2O = L-asparaginyl-tRNA(Asn) + L-glutamate + ADP + phosphate + 2 H(+). In terms of biological role, allows the formation of correctly charged Asn-tRNA(Asn) or Gln-tRNA(Gln) through the transamidation of misacylated Asp-tRNA(Asn) or Glu-tRNA(Gln) in organisms which lack either or both of asparaginyl-tRNA or glutaminyl-tRNA synthetases. The reaction takes place in the presence of glutamine and ATP through an activated phospho-Asp-tRNA(Asn) or phospho-Glu-tRNA(Gln). The polypeptide is Aspartyl/glutamyl-tRNA(Asn/Gln) amidotransferase subunit B (Marinobacter nauticus (strain ATCC 700491 / DSM 11845 / VT8) (Marinobacter aquaeolei)).